The sequence spans 124 residues: uncharacterized protein (124 aa).

This protein may be involved in virus assembly. This is an uncharacterized protein from Sulfolobus spindle-shape virus 1 (SSV1).